The following is a 78-amino-acid chain: Musculoskeletal embryonic nuclear protein 1 (78 aa).

2 disordered regions span residues 1–33 (MSQP…QEIK) and 45–78 (QMGS…SVFG). Positions 6-14 (PVKKKRPPV) match the Nuclear localization signal motif. Residues 64-78 (VFEKSKDEPPKSVFG) show a composition bias toward basic and acidic residues.

It belongs to the MUSTN1 family. In terms of tissue distribution, predominantly expressed in heart and skeletal muscle. Detected in skeletal muscle satellite cells where expression increases with cell proliferation.

Its subcellular location is the nucleus. Functionally, promotes the differentiation and proliferation of skeletal muscle satellite cells. In Gallus gallus (Chicken), this protein is Musculoskeletal embryonic nuclear protein 1 (MUSTN1).